A 201-amino-acid chain; its full sequence is Peptide deformylase (201 aa).

2 residues coordinate Fe cation: Cys-121 and His-163. Glu-164 is an active-site residue. Residue His-167 participates in Fe cation binding.

This sequence belongs to the polypeptide deformylase family. Requires Fe(2+) as cofactor.

It catalyses the reaction N-terminal N-formyl-L-methionyl-[peptide] + H2O = N-terminal L-methionyl-[peptide] + formate. Removes the formyl group from the N-terminal Met of newly synthesized proteins. Requires at least a dipeptide for an efficient rate of reaction. N-terminal L-methionine is a prerequisite for activity but the enzyme has broad specificity at other positions. The sequence is that of Peptide deformylase from Parasynechococcus marenigrum (strain WH8102).